The chain runs to 225 residues: Ribonuclease 3 (225 aa).

Positions phenylalanine 4–asparagine 133 constitute an RNase III domain. Glutamate 46 lines the Mg(2+) pocket. Aspartate 50 is an active-site residue. Mg(2+)-binding residues include asparagine 119 and glutamate 122. Glutamate 122 is an active-site residue. In terms of domain architecture, DRBM spans aspartate 158–lysine 225.

This sequence belongs to the ribonuclease III family. As to quaternary structure, homodimer. Mg(2+) is required as a cofactor.

The protein localises to the cytoplasm. The catalysed reaction is Endonucleolytic cleavage to 5'-phosphomonoester.. In terms of biological role, digests double-stranded RNA. Involved in the processing of primary rRNA transcript to yield the immediate precursors to the large and small rRNAs (23S and 16S). Processes some mRNAs, and tRNAs when they are encoded in the rRNA operon. Processes pre-crRNA and tracrRNA of type II CRISPR loci if present in the organism. This Rickettsia prowazekii (strain Madrid E) protein is Ribonuclease 3.